The chain runs to 192 residues: Protein GrpE (192 aa).

The tract at residues 1-43 is disordered; that stretch reads MQENKQPSEIQGELPQPPDGESVPPQPTNEQAPPDTDTMPRIE.

The protein belongs to the GrpE family. Homodimer.

It localises to the cytoplasm. In terms of biological role, participates actively in the response to hyperosmotic and heat shock by preventing the aggregation of stress-denatured proteins, in association with DnaK and GrpE. It is the nucleotide exchange factor for DnaK and may function as a thermosensor. Unfolded proteins bind initially to DnaJ; upon interaction with the DnaJ-bound protein, DnaK hydrolyzes its bound ATP, resulting in the formation of a stable complex. GrpE releases ADP from DnaK; ATP binding to DnaK triggers the release of the substrate protein, thus completing the reaction cycle. Several rounds of ATP-dependent interactions between DnaJ, DnaK and GrpE are required for fully efficient folding. This Aromatoleum aromaticum (strain DSM 19018 / LMG 30748 / EbN1) (Azoarcus sp. (strain EbN1)) protein is Protein GrpE.